The chain runs to 710 residues: Choline transporter-like protein 5 (710 aa).

A disordered region spans residues M1 to F21. Residues M1–D32 lie on the Cytoplasmic side of the membrane. Residues V33–A53 traverse the membrane as a helical segment. At W54–W236 the chain is on the extracellular side. N82 and N184 each carry an N-linked (GlcNAc...) asparagine glycan. Residues K237 to L257 form a helical membrane-spanning segment. Residues R258–T260 are Cytoplasmic-facing. The helical transmembrane segment at A261–W281 threads the bilayer. Over Y282 to W319 the chain is Extracellular. The chain crosses the membrane as a helical span at residues F320–L340. Residues R341 to Q345 are Cytoplasmic-facing. Residues V346–I366 traverse the membrane as a helical segment. Over Y367–P368 the chain is Extracellular. A helical membrane pass occupies residues V369–L389. Residues A390–N454 are Cytoplasmic-facing. A helical membrane pass occupies residues L455 to G475. The Extracellular segment spans residues A476–S509. The chain crosses the membrane as a helical span at residues L510–L530. Over D531 to Y604 the chain is Cytoplasmic. Residues F605 to L625 form a helical membrane-spanning segment. Residues F626 to Y643 are Extracellular-facing. A helical transmembrane segment spans residues W644–V664. The Cytoplasmic segment spans residues Y665 to Q710.

This sequence belongs to the CTL (choline transporter-like) family.

It localises to the cell membrane. The enzyme catalyses choline(out) + n H(+)(in) = choline(in) + n H(+)(out). In terms of biological role, choline/H+ antiporter. The sequence is that of Choline transporter-like protein 5 (Slc44a5) from Mus musculus (Mouse).